A 1110-amino-acid polypeptide reads, in one-letter code: Error-prone DNA polymerase (1110 aa).

A disordered region spans residues 1072–1110 (LGELHEPLNDDRREHPDNPAQRIRHPRDVRILPPSRDFH). Basic and acidic residues-rich tracts occupy residues 1073-1088 (GELHEPLNDDRREHPD) and 1097-1110 (PRDVRILPPSRDFH).

It belongs to the DNA polymerase type-C family. DnaE2 subfamily.

The protein resides in the cytoplasm. It carries out the reaction DNA(n) + a 2'-deoxyribonucleoside 5'-triphosphate = DNA(n+1) + diphosphate. Its function is as follows. DNA polymerase involved in damage-induced mutagenesis and translesion synthesis (TLS). It is not the major replicative DNA polymerase. The protein is Error-prone DNA polymerase of Rhodopseudomonas palustris (strain BisB5).